The primary structure comprises 300 residues: Ferredoxin/F(420)H(2)-dependent CoB-CoM heterodisulfide reductase subunit B (300 aa).

The protein belongs to the HdrB family. The ferredoxin/F(420)H(2)-dependent CoB-CoM heterodisulfide reductase is composed of three subunits; HdrA2, HdrB2 and HdrC2. It depends on [4Fe-4S] cluster as a cofactor.

The protein localises to the cytoplasm. The catalysed reaction is coenzyme B + coenzyme M + 2 oxidized [2Fe-2S]-[ferredoxin] = coenzyme M-coenzyme B heterodisulfide + 2 reduced [2Fe-2S]-[ferredoxin] + 2 H(+). It carries out the reaction coenzyme B + 2 oxidized coenzyme F420-(gamma-L-Glu)(n) + coenzyme M + 2 reduced [2Fe-2S]-[ferredoxin] + 4 H(+) = coenzyme M-coenzyme B heterodisulfide + 2 reduced coenzyme F420-(gamma-L-Glu)(n) + 2 oxidized [2Fe-2S]-[ferredoxin]. It participates in cofactor metabolism; coenzyme M-coenzyme B heterodisulfide reduction; coenzyme B and coenzyme M from coenzyme M-coenzyme B heterodisulfide: step 1/1. Functionally, part of a complex that catalyzes the reversible reduction of CoM-S-S-CoB to the thiol-coenzymes H-S-CoM (coenzyme M) and H-S-CoB (coenzyme B). Catalyzes the transfer of electrons from ferredoxin to CoM-S-S-CoB during methanogenesis from acetate. Electrons transfer from ferredoxin to CoM-S-S-CoB via HdrA2, HdrC2 and HdrB2. In addition, the complex can use electron bifurcation to direct electron pairs from reduced coenzyme F420 towards the reduction of both ferredoxin and CoB-CoM heterodisulfide. This activity may take place during Fe(III)-dependent anaerobic methane oxidation. The sequence is that of Ferredoxin/F(420)H(2)-dependent CoB-CoM heterodisulfide reductase subunit B from Methanosarcina acetivorans (strain ATCC 35395 / DSM 2834 / JCM 12185 / C2A).